Reading from the N-terminus, the 132-residue chain is Capsid protein (132 aa).

This sequence belongs to the Leviviricetes capsid protein family. Homodimer. The capsid protein dimer binds to the viral RNA via an operator hairpin, but also many other RNA sequences in the viral genome.

It is found in the virion. Capsid protein self-assembles to form an icosahedral capsid with a T=3 symmetry, about 26 nm in diameter, and consisting of 89 capsid proteins dimers (178 capsid proteins). Involved in viral genome encapsidation through the interaction between a capsid protein dimer and the multiple packaging signals present in the RNA genome. Binding of the capsid proteins to the viral RNA induces a conformational change required for efficient T=3 shell formation. The capsid also contains 1 copy of the A2 maturation protein. In terms of biological role, acts as a translational repressor of viral replicase synthesis late in infection. This latter function is the result of capsid protein interaction with an RNA hairpin which contains the replicase ribosome-binding site. The protein is Capsid protein of Enterobacteria phage SP (Bacteriophage SP).